The following is a 315-amino-acid chain: Dihydroorotate dehydrogenase (fumarate) (315 aa).

Residues K46, 70–74, and N130 each bind substrate; that span reads NSMGL. Residue 46 to 47 coordinates FMN; sequence KS. FMN is bound at residue N130. C133 serves as the catalytic Nucleophile. FMN is bound by residues K167 and I195. 196–197 provides a ligand contact to substrate; it reads NS. FMN is bound by residues G224, 252–253, and 274–275; these read GG and GT.

It belongs to the dihydroorotate dehydrogenase family. Type 1 subfamily. Homodimer. The cofactor is FMN.

It localises to the cytoplasm. It carries out the reaction (S)-dihydroorotate + fumarate = orotate + succinate. Its pathway is pyrimidine metabolism; UMP biosynthesis via de novo pathway. In terms of biological role, catalyzes the conversion of dihydroorotate to orotate with fumarate as the electron acceptor. This Kluyveromyces lactis (strain ATCC 8585 / CBS 2359 / DSM 70799 / NBRC 1267 / NRRL Y-1140 / WM37) (Yeast) protein is Dihydroorotate dehydrogenase (fumarate) (URA1).